Reading from the N-terminus, the 281-residue chain is Pantothenate synthetase (281 aa).

17 to 24 contributes to the ATP binding site; sequence MGFLHEGH. H24 functions as the Proton donor in the catalytic mechanism. Q48 contacts (R)-pantoate. Q48 contacts beta-alanine. 134–137 provides a ligand contact to ATP; that stretch reads GEKD. Position 140 (Q140) interacts with (R)-pantoate. Residues V163 and 176–179 contribute to the ATP site; that span reads LSSR.

Belongs to the pantothenate synthetase family. Homodimer.

The protein resides in the cytoplasm. The enzyme catalyses (R)-pantoate + beta-alanine + ATP = (R)-pantothenate + AMP + diphosphate + H(+). The protein operates within cofactor biosynthesis; (R)-pantothenate biosynthesis; (R)-pantothenate from (R)-pantoate and beta-alanine: step 1/1. Catalyzes the condensation of pantoate with beta-alanine in an ATP-dependent reaction via a pantoyl-adenylate intermediate. The polypeptide is Pantothenate synthetase (Deinococcus radiodurans (strain ATCC 13939 / DSM 20539 / JCM 16871 / CCUG 27074 / LMG 4051 / NBRC 15346 / NCIMB 9279 / VKM B-1422 / R1)).